A 1177-amino-acid chain; its full sequence is DNA-directed RNA polymerase subunit beta (1177 aa).

Residues 1147–1161 are compositionally biased toward acidic residues; the sequence is DDTEIEMRDTEDDDD. The interval 1147 to 1177 is disordered; the sequence is DDTEIEMRDTEDDDDHQSADKLNVEVETTKE. Basic and acidic residues predominate over residues 1162-1177; it reads HQSADKLNVEVETTKE.

This sequence belongs to the RNA polymerase beta chain family. As to quaternary structure, the RNAP catalytic core consists of 2 alpha, 1 beta, 1 beta' and 1 omega subunit. When a sigma factor is associated with the core the holoenzyme is formed, which can initiate transcription.

It carries out the reaction RNA(n) + a ribonucleoside 5'-triphosphate = RNA(n+1) + diphosphate. Its function is as follows. DNA-dependent RNA polymerase catalyzes the transcription of DNA into RNA using the four ribonucleoside triphosphates as substrates. The sequence is that of DNA-directed RNA polymerase subunit beta from Bacillus cereus (strain G9842).